The primary structure comprises 273 residues: Dermonecrotic toxin LapSicTox-alphaIB1aiii (273 aa).

Residue histidine 5 is part of the active site. Mg(2+) contacts are provided by glutamate 25 and aspartate 27. Residue histidine 41 is the Nucleophile of the active site. 2 cysteine pairs are disulfide-bonded: cysteine 45-cysteine 51 and cysteine 47-cysteine 190. Position 85 (aspartate 85) interacts with Mg(2+). Asparagine 250 carries N-linked (GlcNAc...) asparagine glycosylation.

This sequence belongs to the arthropod phospholipase D family. Class II subfamily. The cofactor is Mg(2+). In terms of tissue distribution, expressed by the venom gland.

Its subcellular location is the secreted. The catalysed reaction is an N-(acyl)-sphingosylphosphocholine = an N-(acyl)-sphingosyl-1,3-cyclic phosphate + choline. It carries out the reaction an N-(acyl)-sphingosylphosphoethanolamine = an N-(acyl)-sphingosyl-1,3-cyclic phosphate + ethanolamine. It catalyses the reaction a 1-acyl-sn-glycero-3-phosphocholine = a 1-acyl-sn-glycero-2,3-cyclic phosphate + choline. The enzyme catalyses a 1-acyl-sn-glycero-3-phosphoethanolamine = a 1-acyl-sn-glycero-2,3-cyclic phosphate + ethanolamine. Dermonecrotic toxins cleave the phosphodiester linkage between the phosphate and headgroup of certain phospholipids (sphingolipid and lysolipid substrates), forming an alcohol (often choline) and a cyclic phosphate. This toxin acts on sphingomyelin (SM). It may also act on ceramide phosphoethanolamine (CPE), lysophosphatidylcholine (LPC) and lysophosphatidylethanolamine (LPE), but not on lysophosphatidylserine (LPS), and lysophosphatidylglycerol (LPG). It acts by transphosphatidylation, releasing exclusively cyclic phosphate products as second products. Induces dermonecrosis, hemolysis, increased vascular permeability, edema, inflammatory response, and platelet aggregation. This chain is Dermonecrotic toxin LapSicTox-alphaIB1aiii, found in Loxosceles apachea (Apache recluse spider).